We begin with the raw amino-acid sequence, 60 residues long: Large ribosomal subunit protein bL32 (60 aa).

Belongs to the bacterial ribosomal protein bL32 family.

In Persephonella marina (strain DSM 14350 / EX-H1), this protein is Large ribosomal subunit protein bL32.